Reading from the N-terminus, the 96-residue chain is Phosphoribosyl-ATP pyrophosphatase (96 aa).

This sequence belongs to the PRA-PH family.

Its subcellular location is the cytoplasm. It catalyses the reaction 1-(5-phospho-beta-D-ribosyl)-ATP + H2O = 1-(5-phospho-beta-D-ribosyl)-5'-AMP + diphosphate + H(+). Its pathway is amino-acid biosynthesis; L-histidine biosynthesis; L-histidine from 5-phospho-alpha-D-ribose 1-diphosphate: step 2/9. The sequence is that of Phosphoribosyl-ATP pyrophosphatase from Methanococcus maripaludis (strain C6 / ATCC BAA-1332).